A 238-amino-acid chain; its full sequence is Large ribosomal subunit protein uL2 (238 aa).

Disordered stretches follow at residues 1–34 (MGKRLRQQRAGRGTPTYRSRAHIHPGPAKYPPLS) and 197–238 (VDHP…RRKR). The segment covering 224-238 (KVGHIAARRTGRRKR) has biased composition (basic residues).

It belongs to the universal ribosomal protein uL2 family. In terms of assembly, part of the 50S ribosomal subunit. Forms a bridge to the 30S subunit in the 70S ribosome.

Its function is as follows. One of the primary rRNA binding proteins. Required for association of the 30S and 50S subunits to form the 70S ribosome, for tRNA binding and peptide bond formation. It has been suggested to have peptidyltransferase activity; this is somewhat controversial. Makes several contacts with the 16S rRNA in the 70S ribosome. In Aeropyrum pernix (strain ATCC 700893 / DSM 11879 / JCM 9820 / NBRC 100138 / K1), this protein is Large ribosomal subunit protein uL2.